Consider the following 588-residue polypeptide: Nuclear hormone receptor family member nhr-23 (588 aa).

The segment at 50 to 73 (LHAKSSLQPSLSIETPKSKENDES) is disordered. Over residues 52-64 (AKSSLQPSLSIET) the composition is skewed to polar residues. The segment at residues 160 to 235 (VIPCKVCGDK…LGMSRDAVKF (76 aa)) is a DNA-binding region (nuclear receptor). 2 NR C4-type zinc fingers span residues 163–183 (CKVC…CEGC) and 199–223 (CPRQ…LKKC). The NR LBD domain occupies 345–586 (PEEDVATRVI…ALYKELFTAD (242 aa)).

It belongs to the nuclear hormone receptor family. NR1 subfamily. As to expression, expressed in the germline and oocytes and is a maternal gene product. In males and sperm-producing hermaphrodites, expressed in early pachytene spermatocytes, increasing in level throughout late pachytene. Expression is undetectable in meiotically dividing spermatocytes or mature spermatids.

Its subcellular location is the nucleus. In terms of biological role, orphan nuclear receptor. Transcription factor. Modulates expression of target genes, such as Period protein homolog lin-42 and microRNA let-7, by binding to hormone response elements (HRE). Involved in promoting oscillatory expression of the primary transcripts of let-7 and paralogous microRNAs miR-48, miR-84, and miR-241. Plays a role in normal development and required to regulate each larval molt. Involved in regulating both the frequency and number of molts, acting as part of a negative feedback loop with the let-7 family of microRNAs, perhaps contributing to a self-sustaining molecular-genetic oscillator. Positively modulates expression of collagen and hedgehog-related genes. Involved in development of the gonad and associated epidermal structures. Required in spermatogenesis, acting following the sperm/oocyte cell fate decision, downstream of the canonical sex-determination pathway. Involved in regulating formation of the sperm-specific fibrous body-membranous organelle (FB-MO) complexes, acting independently of transcription regulator spe-44. In Caenorhabditis elegans, this protein is Nuclear hormone receptor family member nhr-23.